The primary structure comprises 262 residues: 4-hydroxy-2-oxo-heptane-1,7-dioate aldolase (262 aa).

The active-site Proton acceptor is His-45. Gln-147 is a substrate binding site. Glu-149 contacts a divalent metal cation. Substrate is bound by residues Ala-174 and Asp-175. Asp-175 serves as a coordination point for a divalent metal cation.

Belongs to the HpcH/HpaI aldolase family. In terms of assembly, homohexamer; trimer of dimers. The cofactor is a divalent metal cation.

The catalysed reaction is 4-hydroxy-2-oxoheptanedioate = succinate semialdehyde + pyruvate. It participates in aromatic compound metabolism; 4-hydroxyphenylacetate degradation; pyruvate and succinate semialdehyde from 4-hydroxyphenylacetate: step 7/7. Functionally, catalyzes the reversible retro-aldol cleavage of 4-hydroxy-2-ketoheptane-1,7-dioate (HKHD) to pyruvate and succinic semialdehyde. In Shigella sonnei (strain Ss046), this protein is 4-hydroxy-2-oxo-heptane-1,7-dioate aldolase.